A 445-amino-acid polypeptide reads, in one-letter code: Inner membrane metabolite transport protein YgcS (445 aa).

The Cytoplasmic portion of the chain corresponds to 1–22 (MNTSPVRMDDLPLNRFHCRIAA). Residues 23-43 (LTFGAHLTDGYVLGVIGYAII) form a helical membrane-spanning segment. Residues 44–56 (QLTPAMQLTPFMA) lie on the Periplasmic side of the membrane. Residues 57–77 (GMIGGSALLGLFLGSLVLGWI) form a helical membrane-spanning segment. Over 78-85 (SDHIGRQK) the chain is Cytoplasmic. The helical transmembrane segment at 86-106 (IFTFSFLLITLASFLQFFATT) threads the bilayer. At 107–114 (PEHLIGLR) the chain is on the periplasmic side. Residues 115–135 (ILIGIGLGGDYSVGHTLLAEF) form a helical membrane-spanning segment. The Cytoplasmic portion of the chain corresponds to 136-142 (SPRRHRG). The helical transmembrane segment at 143 to 163 (ILLGAFSVVWTVGYVLASIAG) threads the bilayer. The Periplasmic portion of the chain corresponds to 164-175 (HHFISENPEAWR). Residues 176 to 196 (WLLASAALPALLITLLRWGTP) form a helical membrane-spanning segment. Residues 197 to 253 (ESPRWLLRQGRFAEAHAIVHRYFGPHVLLGDEVVTATHKHIKTLFSSRYWRRTAFNS) are Cytoplasmic-facing. Residues 254–274 (VFFVCLVIPWFVIYTWLPTIA) form a helical membrane-spanning segment. Residues 275-286 (QTIGLEDALTAS) lie on the Periplasmic side of the membrane. Residues 287–307 (LMLNALLIVGALLGLVLTHLL) traverse the membrane as a helical segment. At 308 to 311 (AHRK) the chain is on the cytoplasmic side. A helical membrane pass occupies residues 312-332 (FLLGSFLLLAATLVVMACLPS). Residues 333-337 (GSSLT) lie on the Periplasmic side of the membrane. Residues 338-358 (LLLFVLFSTTISAVSNLVGIL) traverse the membrane as a helical segment. The Cytoplasmic portion of the chain corresponds to 359-369 (PAESFPTDIRS). The chain crosses the membrane as a helical span at residues 370 to 390 (LGVGFATAMSRLGAAVSTGLL). Topologically, residues 391–400 (PWVLAQWGMQ) are periplasmic. The chain crosses the membrane as a helical span at residues 401–421 (VTLLLLATVLLVGFVVTWLWA). The Cytoplasmic segment spans residues 422–445 (PETKALPLVAAGNVGGANEHSVSV).

This sequence belongs to the major facilitator superfamily. Sugar transporter (TC 2.A.1.1) family.

It is found in the cell inner membrane. The polypeptide is Inner membrane metabolite transport protein YgcS (ygcS) (Escherichia coli (strain K12)).